The primary structure comprises 165 residues: Thiol peroxidase (165 aa).

The 147-residue stretch at 18–164 (RKVGDKAPNF…YEAAIEAAKK (147 aa)) folds into the Thioredoxin domain. The active-site Cysteine sulfenic acid (-SOH) intermediate is Cys-60. A disulfide bridge connects residues Cys-60 and Cys-94.

Belongs to the peroxiredoxin family. Tpx subfamily. In terms of assembly, homodimer.

The enzyme catalyses a hydroperoxide + [thioredoxin]-dithiol = an alcohol + [thioredoxin]-disulfide + H2O. Thiol-specific peroxidase that catalyzes the reduction of hydrogen peroxide and organic hydroperoxides to water and alcohols, respectively. Plays a role in cell protection against oxidative stress by detoxifying peroxides. The polypeptide is Thiol peroxidase (Listeria innocua serovar 6a (strain ATCC BAA-680 / CLIP 11262)).